Consider the following 470-residue polypeptide: Argininosuccinate lyase (470 aa).

The protein belongs to the lyase 1 family. Argininosuccinate lyase subfamily.

The protein localises to the cytoplasm. The enzyme catalyses 2-(N(omega)-L-arginino)succinate = fumarate + L-arginine. It participates in amino-acid biosynthesis; L-arginine biosynthesis; L-arginine from L-ornithine and carbamoyl phosphate: step 3/3. The chain is Argininosuccinate lyase from Leptospira borgpetersenii serovar Hardjo-bovis (strain JB197).